A 98-amino-acid chain; its full sequence is NADH-ubiquinone oxidoreductase chain 4L (98 aa).

The next 3 helical transmembrane spans lie at 1–21, 29–49, and 61–81; these read MSLV…GLLM, SLLC…LTIL, and IILL…LVMV.

It belongs to the complex I subunit 4L family. In terms of assembly, core subunit of respiratory chain NADH dehydrogenase (Complex I) which is composed of 45 different subunits.

It is found in the mitochondrion inner membrane. The enzyme catalyses a ubiquinone + NADH + 5 H(+)(in) = a ubiquinol + NAD(+) + 4 H(+)(out). Functionally, core subunit of the mitochondrial membrane respiratory chain NADH dehydrogenase (Complex I) which catalyzes electron transfer from NADH through the respiratory chain, using ubiquinone as an electron acceptor. Part of the enzyme membrane arm which is embedded in the lipid bilayer and involved in proton translocation. This chain is NADH-ubiquinone oxidoreductase chain 4L (MT-ND4L), found in Rangifer tarandus (Reindeer).